Here is a 729-residue protein sequence, read N- to C-terminus: Fatty acid oxidation complex subunit alpha (729 aa).

The segment at 1-189 is enoyl-CoA hydratase/isomerase; the sequence is MLYKGDTLYV…KIGLIDGIVK (189 aa). A substrate-binding site is contributed by D296. The tract at residues 311–729 is 3-hydroxyacyl-CoA dehydrogenase; the sequence is EMPKQAAVLG…ARPVGALKTA (419 aa). Residues M324, D343, 400-402, K407, and S429 each bind NAD(+); that span reads VVE. Residue H450 is the For 3-hydroxyacyl-CoA dehydrogenase activity of the active site. Position 453 (N453) interacts with NAD(+). Residues N500 and Y660 each coordinate substrate. The tract at residues 708–729 is disordered; that stretch reads RHNEPYYPPVEPARPVGALKTA.

The protein in the N-terminal section; belongs to the enoyl-CoA hydratase/isomerase family. This sequence in the C-terminal section; belongs to the 3-hydroxyacyl-CoA dehydrogenase family. In terms of assembly, heterotetramer of two alpha chains (FadB) and two beta chains (FadA).

The catalysed reaction is a (3S)-3-hydroxyacyl-CoA + NAD(+) = a 3-oxoacyl-CoA + NADH + H(+). The enzyme catalyses a (3S)-3-hydroxyacyl-CoA = a (2E)-enoyl-CoA + H2O. It carries out the reaction a 4-saturated-(3S)-3-hydroxyacyl-CoA = a (3E)-enoyl-CoA + H2O. It catalyses the reaction (3S)-3-hydroxybutanoyl-CoA = (3R)-3-hydroxybutanoyl-CoA. The catalysed reaction is a (3Z)-enoyl-CoA = a 4-saturated (2E)-enoyl-CoA. The enzyme catalyses a (3E)-enoyl-CoA = a 4-saturated (2E)-enoyl-CoA. The protein operates within lipid metabolism; fatty acid beta-oxidation. Involved in the aerobic and anaerobic degradation of long-chain fatty acids via beta-oxidation cycle. Catalyzes the formation of 3-oxoacyl-CoA from enoyl-CoA via L-3-hydroxyacyl-CoA. It can also use D-3-hydroxyacyl-CoA and cis-3-enoyl-CoA as substrate. The protein is Fatty acid oxidation complex subunit alpha of Enterobacter sp. (strain 638).